The chain runs to 77 residues: Large ribosomal subunit protein uL29 (77 aa).

The protein belongs to the universal ribosomal protein uL29 family.

The sequence is that of Large ribosomal subunit protein uL29 from Mycobacterium avium (strain 104).